The following is a 281-amino-acid chain: sn-glycerol-3-phosphate transport system permease protein UgpE (281 aa).

Transmembrane regions (helical) follow at residues 14 to 34, 85 to 105, 113 to 133, 142 to 162, 188 to 210, and 247 to 267; these read VMLI…FVAA, LAIT…IVYF, FFWM…FPTV, MDSY…TFLF, FFDM…TFIY, and WNQV…VVLL. The 192-residue stretch at 77–268 folds into the ABC transmembrane type-1 domain; the sequence is LLNSFVMALA…LPPLLVVLLM (192 aa).

Belongs to the binding-protein-dependent transport system permease family. UgpAE subfamily. The complex is composed of two ATP-binding proteins (UgpC), two transmembrane proteins (UgpA and UgpE) and a solute-binding protein (UgpB).

The protein resides in the cell inner membrane. In terms of biological role, part of the ABC transporter complex UgpBAEC involved in sn-glycerol-3-phosphate (G3P) import. Probably responsible for the translocation of the substrate across the membrane. The sequence is that of sn-glycerol-3-phosphate transport system permease protein UgpE (ugpE) from Pectobacterium atrosepticum (strain SCRI 1043 / ATCC BAA-672) (Erwinia carotovora subsp. atroseptica).